We begin with the raw amino-acid sequence, 91 residues long: N(2)-fixation sustaining protein CowN (91 aa).

Belongs to the CowN family.

In terms of biological role, is required to sustain N(2)-dependent growth in the presence of low levels of carbon monoxide (CO). Probably acts by protecting the N(2) fixation ability of the nitrogenase complex, which is inactivated in the presence of CO. The protein is N(2)-fixation sustaining protein CowN of Gluconacetobacter diazotrophicus (strain ATCC 49037 / DSM 5601 / CCUG 37298 / CIP 103539 / LMG 7603 / PAl5).